The primary structure comprises 312 residues: Olfactory receptor 867 (312 aa).

At 1–6 (MILNCN) the chain is on the extracellular side. A helical transmembrane segment spans residues 7 to 30 (PFSGLFLSMYLVTVLGNLLIILAV). Residues 31 to 38 (SSNSHLHN) are Cytoplasmic-facing. The chain crosses the membrane as a helical span at residues 39 to 60 (LMYFFLSNLSFVDICFISTTIP). Residues 61 to 81 (KMLVNIHSQTKDISYIECLSQ) lie on the Extracellular side of the membrane. Cysteine 78 and cysteine 160 are oxidised to a cystine. Residues 82 to 101 (VYFLTTFGGMDNFLLTLMAC) form a helical membrane-spanning segment. Residues 102-120 (DRYVAICHPLNYTVIMNLQ) are Cytoplasmic-facing. Residues 121-139 (LCALLILMFWLIMFCVSLI) traverse the membrane as a helical segment. Residues 140 to 177 (HVLLMNELNFSRGTEIPHFFCELAQVLKVANSDTHINN) lie on the Extracellular side of the membrane. An N-linked (GlcNAc...) asparagine glycan is attached at asparagine 148. The helical transmembrane segment at 178–200 (VFMYVVTSLLGLIPMTGILMSYS) threads the bilayer. Over 201 to 217 (QIASSLLKMSSSVSKYK) the chain is Cytoplasmic. The chain crosses the membrane as a helical span at residues 218 to 241 (AFSTCGSHLCVVSLFYGSATIVYF). At 242-253 (CSSVLHSTHKKM) the chain is on the extracellular side. A helical transmembrane segment spans residues 254–273 (IASLMYTVISPMLNPFIYSL). Over 274–312 (RNKDVKGALGKLFIRVASCPLWSKDFRPKFILKPERQSL) the chain is Cytoplasmic.

This sequence belongs to the G-protein coupled receptor 1 family. As to expression, epithelium of the tongue; including the taste buds.

Its subcellular location is the cell membrane. Functionally, possible olfactory or taste receptor. The sequence is that of Olfactory receptor 867 (Olr867) from Rattus norvegicus (Rat).